We begin with the raw amino-acid sequence, 186 residues long: Peptidyl-tRNA hydrolase (186 aa).

Residue tyrosine 16 participates in tRNA binding. Catalysis depends on histidine 21, which acts as the Proton acceptor. Residues tyrosine 60 and asparagine 62 each coordinate tRNA.

Belongs to the PTH family. In terms of assembly, monomer.

It localises to the cytoplasm. It catalyses the reaction an N-acyl-L-alpha-aminoacyl-tRNA + H2O = an N-acyl-L-amino acid + a tRNA + H(+). Hydrolyzes ribosome-free peptidyl-tRNAs (with 1 or more amino acids incorporated), which drop off the ribosome during protein synthesis, or as a result of ribosome stalling. Functionally, catalyzes the release of premature peptidyl moieties from peptidyl-tRNA molecules trapped in stalled 50S ribosomal subunits, and thus maintains levels of free tRNAs and 50S ribosomes. This chain is Peptidyl-tRNA hydrolase, found in Tropheryma whipplei (strain Twist) (Whipple's bacillus).